A 1094-amino-acid chain; its full sequence is Protein transport protein Sec24C (1094 aa).

The disordered stretch occupies residues 1-338; that stretch reads MNVNQSVPPV…PIQVIEDDRN (338 aa). Residues 8–19 are compositionally biased toward pro residues; sequence PPVPPFGQPQPI. Composition is skewed to low complexity over residues 20-29 and 60-77; these read YPGYHQSSYG and SRAP…AQAP. Polar residues predominate over residues 90 to 101; it reads DVQNGPSSTVQM. Pro residues predominate over residues 123-132; the sequence is VLQPYGPPPT. Composition is skewed to polar residues over residues 133–144, 165–175, 189–215, and 240–251; these read SAQVATQLSGMQ, SLASASGSFPN, PLSQ…SFTP, and SVSQPNHVSSPP. Thr214 is subject to Phosphothreonine. Positions 273–282 are enriched in low complexity; it reads PQQPGYQPQQ. Positions 425, 428, 447, and 450 each coordinate Zn(2+). Residues 425–450 are zinc finger-like; that stretch reads CNRCKAYMCPFMQFIEGGRRFQCCFC. Residues 962–1034 form a Gelsolin-like repeat; sequence TTEPPAVRAS…DNPLSKKVRG (73 aa).

The protein belongs to the SEC23/SEC24 family. SEC24 subfamily. In terms of assembly, COPII is composed of at least five proteins: the Sec23/24 complex, the Sec13/31 complex and Sar1. Interacts with TMED2 and TMED10. Interacts with GOSR2 (via IxM motif) and STX5 (via IxM motif); recruits GOSR2 and STX5 into COPII-coated vesicles. Interacts with DDHD1. Interacts with STING1; promoting STING1 translocation to the COPII vesicles. Ubiquitous.

The protein localises to the cytoplasmic vesicle. The protein resides in the COPII-coated vesicle membrane. It is found in the endoplasmic reticulum membrane. It localises to the cytoplasm. Its subcellular location is the cytosol. In terms of biological role, component of the coat protein complex II (COPII) which promotes the formation of transport vesicles from the endoplasmic reticulum (ER). The coat has two main functions, the physical deformation of the endoplasmic reticulum membrane into vesicles and the selection of cargo molecules for their transport to the Golgi complex. Plays a central role in cargo selection within the COPII complex and together with SEC24D may have a different specificity compared to SEC24A and SEC24B. May more specifically package GPI-anchored proteins through the cargo receptor TMED10. May also be specific for IxM motif-containing cargos like the SNAREs GOSR2 and STX5. In Homo sapiens (Human), this protein is Protein transport protein Sec24C.